The primary structure comprises 342 residues: Inositol-tetrakisphosphate 1-kinase 5 (342 aa).

Residues K25 and K67 each contribute to the 1D-myo-inositol 1,3,4-trisphosphate site. ATP-binding residues include R102 and K154. Residues H165 and K197 each contribute to the 1D-myo-inositol 1,3,4-trisphosphate site. ATP is bound by residues 186–197 and S212; that span reads QEFVNHGGVIFK. D283, D298, and N300 together coordinate Mg(2+). Residue N300 coordinates 1D-myo-inositol 1,3,4-trisphosphate.

This sequence belongs to the ITPK1 family. Monomer. The cofactor is Mg(2+). In terms of tissue distribution, expressed in roots, leaves, flowers, anthers and embryos.

It catalyses the reaction 1D-myo-inositol 3,4,5,6-tetrakisphosphate + ATP = 1D-myo-inositol 1,3,4,5,6-pentakisphosphate + ADP + H(+). The catalysed reaction is 1D-myo-inositol 1,3,4-trisphosphate + ATP = 1D-myo-inositol 1,3,4,5-tetrakisphosphate + ADP + H(+). It carries out the reaction 1D-myo-inositol 1,3,4-trisphosphate + ATP = 1D-myo-inositol 1,3,4,6-tetrakisphosphate + ADP + H(+). In terms of biological role, kinase that can phosphorylate various inositol polyphosphate such as Ins(3,4,5,6)P4 or Ins(1,3,4)P3 and participates in phytic acid biosynthesis in developing seeds. Phytic acid is the primary storage form of phosphorus in cereal grains and other plant seeds. This chain is Inositol-tetrakisphosphate 1-kinase 5 (ITPK5), found in Oryza sativa subsp. japonica (Rice).